Reading from the N-terminus, the 292-residue chain is CCR4-NOT transcription complex subunit 8 (292 aa).

D40, E42, D161, and D230 together coordinate a divalent metal cation.

Belongs to the CAF1 family. As to quaternary structure, component of the CCR4-NOT complex; distinct complexes seem to exist that differ in the participation of probably mutually exclusive catalytic subunits; the complex contains two deadenylase subunits, CNOT6 or CNOT6L, and CNOT7 or CNOT8. In the complex interacts directly with CNOT1. Interacts with BTG1, BTG2 and TOB1. Interacts with BTG4.

The protein resides in the cytoplasm. It is found in the nucleus. The enzyme catalyses Exonucleolytic cleavage of poly(A) to 5'-AMP.. Has 3'-5' poly(A) exoribonuclease activity for synthetic poly(A) RNA substrate. Its function seems to be partially redundant with that of CNOT7. Catalytic component of the CCR4-NOT complex which is linked to various cellular processes including bulk mRNA degradation, miRNA-mediated repression, translational repression during translational initiation and general transcription regulation. During miRNA-mediated repression the complex also seems to act as translational repressor during translational initiation. Additional complex functions may be a consequence of its influence on mRNA expression. Associates with members of the BTG family such as TOB1 and BTG2 and is required for their anti-proliferative activity. The polypeptide is CCR4-NOT transcription complex subunit 8 (Cnot8) (Mus musculus (Mouse)).